A 236-amino-acid polypeptide reads, in one-letter code: Rho-related GTP-binding protein RhoV (236 aa).

The disordered stretch occupies residues 1–27 (MPPRELSEAEPPPLRAPTPPPRRRSAP). Residues 10–20 (EPPPLRAPTPP) show a composition bias toward pro residues. The residue at position 25 (serine 25) is a Phosphoserine. GTP is bound by residues 38-45 (GDGAVGKS), 85-89 (DTAGQ), and 143-146 (TQAD). Cysteine 234 carries S-palmitoyl cysteine lipidation.

It belongs to the small GTPase superfamily. Rho family. In terms of assembly, interacts with PAK2. Requires Mg(2+) as cofactor. As to expression, highly expressed in pancreas, placenta, and fetal brain.

It is found in the cell membrane. The protein resides in the endosome membrane. Plays a role in the control of the actin cytoskeleton via activation of the JNK pathway. The protein is Rho-related GTP-binding protein RhoV of Homo sapiens (Human).